Reading from the N-terminus, the 402-residue chain is Ubiquitin-like modifier-activating enzyme 5 (402 aa).

5 residues coordinate ATP: Gly-81, Asp-102, Lys-125, Asn-148, and Asn-182. Positions 224 and 227 each coordinate Zn(2+). Cys-248 serves as the catalytic Glycyl thioester intermediate. Residues Cys-301 and Cys-306 each contribute to the Zn(2+) site. The interval 369–402 (EAPEKSSETSEETVTTAPPDDASLEDLMAQMKSM) is disordered.

Belongs to the ubiquitin-activating E1 family. UBA5 subfamily.

E1-like enzyme which activates UFM1. This chain is Ubiquitin-like modifier-activating enzyme 5, found in Drosophila erecta (Fruit fly).